Consider the following 316-residue polypeptide: 4-diphosphocytidyl-2-C-methyl-D-erythritol kinase (316 aa).

Lys14 is a catalytic residue. Residue 96-106 (PMGAGLGGGSS) participates in ATP binding. The active site involves Asp138.

This sequence belongs to the GHMP kinase family. IspE subfamily.

The enzyme catalyses 4-CDP-2-C-methyl-D-erythritol + ATP = 4-CDP-2-C-methyl-D-erythritol 2-phosphate + ADP + H(+). The protein operates within isoprenoid biosynthesis; isopentenyl diphosphate biosynthesis via DXP pathway; isopentenyl diphosphate from 1-deoxy-D-xylulose 5-phosphate: step 3/6. Functionally, catalyzes the phosphorylation of the position 2 hydroxy group of 4-diphosphocytidyl-2C-methyl-D-erythritol. This chain is 4-diphosphocytidyl-2-C-methyl-D-erythritol kinase, found in Solibacter usitatus (strain Ellin6076).